We begin with the raw amino-acid sequence, 726 residues long: Procollagen-lysine,2-oxoglutarate 5-dioxygenase 1 (726 aa).

Residues M1–T18 form the signal peptide. N196 and N537 each carry an N-linked (GlcNAc...) asparagine glycan. Residues Q635 to P726 enclose the Fe2OG dioxygenase domain. H655 and D657 together coordinate Fe cation. A glycan (N-linked (GlcNAc...) asparagine) is linked at N685. Residue H707 participates in Fe cation binding. R717 is an active-site residue.

In terms of assembly, homodimer. Identified in a complex with P3H3 and P3H4. Fe(2+) is required as a cofactor. L-ascorbate serves as cofactor.

The protein resides in the rough endoplasmic reticulum membrane. The enzyme catalyses L-lysyl-[collagen] + 2-oxoglutarate + O2 = (5R)-5-hydroxy-L-lysyl-[collagen] + succinate + CO2. Its function is as follows. Part of a complex composed of PLOD1, P3H3 and P3H4 that catalyzes hydroxylation of lysine residues in collagen alpha chains and is required for normal assembly and cross-linkling of collagen fibrils. Forms hydroxylysine residues in -Xaa-Lys-Gly- sequences in collagens. These hydroxylysines serve as sites of attachment for carbohydrate units and are essential for the stability of the intermolecular collagen cross-links. The sequence is that of Procollagen-lysine,2-oxoglutarate 5-dioxygenase 1 (PLOD1) from Bos taurus (Bovine).